The sequence spans 117 residues: MDMRVPAQLLGLLLLWFPGARCDIQMTQSPSSLSASVGDRVTITCRASQGIRNDLGWYQQKPGKAPKRLIYAASSLQSGVPSRFSGSGSGTEFTLTISSLQPEDFATYYCLQHNSYP.

The signal sequence occupies residues 1-22; sequence MDMRVPAQLLGLLLLWFPGARC. A framework-1 region spans residues 23-45; the sequence is DIQMTQSPSSLSASVGDRVTITC. The 94-residue stretch at 24–117 folds into the Ig-like domain; sequence IQMTQSPSSL…YYCLQHNSYP (94 aa). Cys45 and Cys110 are disulfide-bonded. The segment at 46–56 is complementarity-determining-1; sequence RASQGIRNDLG. Positions 57–71 are framework-2; sequence WYQQKPGKAPKRLIY. The segment at 72–78 is complementarity-determining-2; that stretch reads AASSLQS. The segment at 79-110 is framework-3; it reads GVPSRFSGSGSGTEFTLTISSLQPEDFATYYC. The segment at 111 to 117 is complementarity-determining-3; sequence LQHNSYP.

In terms of assembly, immunoglobulins are composed of two identical heavy chains and two identical light chains; disulfide-linked.

Its subcellular location is the secreted. The protein localises to the cell membrane. Functionally, v region of the variable domain of immunoglobulin light chains that participates in the antigen recognition. Immunoglobulins, also known as antibodies, are membrane-bound or secreted glycoproteins produced by B lymphocytes. In the recognition phase of humoral immunity, the membrane-bound immunoglobulins serve as receptors which, upon binding of a specific antigen, trigger the clonal expansion and differentiation of B lymphocytes into immunoglobulins-secreting plasma cells. Secreted immunoglobulins mediate the effector phase of humoral immunity, which results in the elimination of bound antigens. The antigen binding site is formed by the variable domain of one heavy chain, together with that of its associated light chain. Thus, each immunoglobulin has two antigen binding sites with remarkable affinity for a particular antigen. The variable domains are assembled by a process called V-(D)-J rearrangement and can then be subjected to somatic hypermutations which, after exposure to antigen and selection, allow affinity maturation for a particular antigen. The chain is Immunoglobulin kappa variable 1-17 from Homo sapiens (Human).